A 396-amino-acid chain; its full sequence is S-adenosylmethionine synthase (396 aa).

His15 is a binding site for ATP. Asp17 is a binding site for Mg(2+). Glu43 serves as a coordination point for K(+). L-methionine is bound by residues Glu56 and Gln99. Residues Gln99–Thr109 form a flexible loop region. Residues Asp173–Lys175, Arg241–Phe242, Asp250, Arg256–Lys257, Ala273, and Lys277 contribute to the ATP site. An L-methionine-binding site is contributed by Asp250. Lys281 is an L-methionine binding site.

Belongs to the AdoMet synthase family. As to quaternary structure, homotetramer; dimer of dimers. Mg(2+) serves as cofactor. Requires K(+) as cofactor.

The protein resides in the cytoplasm. It carries out the reaction L-methionine + ATP + H2O = S-adenosyl-L-methionine + phosphate + diphosphate. It participates in amino-acid biosynthesis; S-adenosyl-L-methionine biosynthesis; S-adenosyl-L-methionine from L-methionine: step 1/1. Its function is as follows. Catalyzes the formation of S-adenosylmethionine (AdoMet) from methionine and ATP. The overall synthetic reaction is composed of two sequential steps, AdoMet formation and the subsequent tripolyphosphate hydrolysis which occurs prior to release of AdoMet from the enzyme. The polypeptide is S-adenosylmethionine synthase (Nocardioides sp. (strain ATCC BAA-499 / JS614)).